Reading from the N-terminus, the 141-residue chain is Nucleoside diphosphate kinase (141 aa).

6 residues coordinate ATP: Lys-11, Phe-59, Arg-87, Thr-93, Arg-104, and Asn-114. His-117 (pros-phosphohistidine intermediate) is an active-site residue.

It belongs to the NDK family. As to quaternary structure, homotetramer. Mg(2+) serves as cofactor.

It localises to the cytoplasm. It catalyses the reaction a 2'-deoxyribonucleoside 5'-diphosphate + ATP = a 2'-deoxyribonucleoside 5'-triphosphate + ADP. The enzyme catalyses a ribonucleoside 5'-diphosphate + ATP = a ribonucleoside 5'-triphosphate + ADP. Major role in the synthesis of nucleoside triphosphates other than ATP. The ATP gamma phosphate is transferred to the NDP beta phosphate via a ping-pong mechanism, using a phosphorylated active-site intermediate. In Burkholderia multivorans (strain ATCC 17616 / 249), this protein is Nucleoside diphosphate kinase.